The primary structure comprises 521 residues: Aldehyde dehydrogenase, mitochondrial (521 aa).

Residues M1–L21 constitute a mitochondrion transit peptide. Positions V13–A28 match the SIFI-degron motif. N6-acetyllysine occurs at positions 56, 77, and 163. G266 to G271 is a binding site for NAD(+). The active-site Proton acceptor is the E289. The active-site Nucleophile is the C323. N6-acetyllysine is present on residues K372, K379, K387, K430, K432, K445, and K455.

The protein belongs to the aldehyde dehydrogenase family. As to quaternary structure, homotetramer. In response to mitochondrial stress, the precursor protein is ubiquitinated by the SIFI complex in the cytoplasm before mitochondrial import, leading to its degradation. Within the SIFI complex, UBR4 initiates ubiquitin chain that are further elongated or branched by KCMF1.

It localises to the mitochondrion matrix. It catalyses the reaction an aldehyde + NAD(+) + H2O = a carboxylate + NADH + 2 H(+). Its pathway is alcohol metabolism; ethanol degradation; acetate from ethanol: step 2/2. Required for clearance of cellular formaldehyde, a cytotoxic and carcinogenic metabolite that induces DNA damage. This chain is Aldehyde dehydrogenase, mitochondrial (ALDH2), found in Sus scrofa (Pig).